The primary structure comprises 602 residues: Sensor histidine kinase AtsR (602 aa).

Helical transmembrane passes span 11 to 31 and 182 to 202; these read IIVALGSLWILGFAAWAFLLF and AIVMLGGVLGVILGALFLLLF. A Histidine kinase domain is found at 242 to 461; it reads MVSHELRTPL…EFVVTLPVEL (220 aa). A Phosphohistidine; by autocatalysis modification is found at histidine 245. Positions 484-601 constitute a Response regulatory domain; sequence HALVVDDNEN…TLNGIVSRLR (118 aa). Residue aspartate 533 is modified to 4-aspartylphosphate.

The protein resides in the cell inner membrane. The enzyme catalyses ATP + protein L-histidine = ADP + protein N-phospho-L-histidine.. Functionally, member of a two-component regulatory system involved in control of gene expression; inhibits synthesis of (at least) the polyketide antibiotic thailandamide. Its two-component partner may be BTH_I0635. The protein is Sensor histidine kinase AtsR of Burkholderia thailandensis (strain ATCC 700388 / DSM 13276 / CCUG 48851 / CIP 106301 / E264).